Reading from the N-terminus, the 505-residue chain is Lysine--tRNA ligase (505 aa).

Residues E415 and E422 each coordinate Mg(2+).

The protein belongs to the class-II aminoacyl-tRNA synthetase family. In terms of assembly, homodimer. The cofactor is Mg(2+).

The protein localises to the cytoplasm. It catalyses the reaction tRNA(Lys) + L-lysine + ATP = L-lysyl-tRNA(Lys) + AMP + diphosphate. The sequence is that of Lysine--tRNA ligase from Salmonella paratyphi C (strain RKS4594).